We begin with the raw amino-acid sequence, 227 residues long: Ureidoacrylate amidohydrolase RutB (227 aa).

The active-site Proton acceptor is the Asp22. Lys131 is a catalytic residue. The active-site Nucleophile is the Cys164.

This sequence belongs to the isochorismatase family. RutB subfamily.

It catalyses the reaction (Z)-3-ureidoacrylate + H2O + H(+) = (Z)-3-aminoacrylate + NH4(+) + CO2. It carries out the reaction (Z)-3-ureidoacrylate + H2O = (Z)-3-aminoacrylate + carbamate + H(+). The catalysed reaction is (Z)-2-methylureidoacrylate + H2O + H(+) = (Z)-2-methylaminoacrylate + NH4(+) + CO2. Functionally, hydrolyzes ureidoacrylate to form aminoacrylate and carbamate. The carbamate hydrolyzes spontaneously, thereby releasing one of the nitrogen atoms of the pyrimidine ring as ammonia and one of its carbon atoms as CO2. The chain is Ureidoacrylate amidohydrolase RutB from Azorhizobium caulinodans (strain ATCC 43989 / DSM 5975 / JCM 20966 / LMG 6465 / NBRC 14845 / NCIMB 13405 / ORS 571).